A 306-amino-acid polypeptide reads, in one-letter code: Transcription factor MYBS1 (306 aa).

The Myb-like domain maps to 18 to 73 (WTREDDKAFENALAACAAPPPADGGAPDDDWFAALAASVPGARSAEEVRRHYEALV). Positions 72–86 (LVEDVAAIDAGRVPL) match the Nuclear export signal 1 motif. The interval 89-142 (YAGEESAAPPDGAGAAAAASKDGGHRRDERKGGGGGYDGGKSCSKAEQERRKGI) is disordered. Low complexity predominate over residues 92-109 (EESAAPPDGAGAAAAASK). Basic and acidic residues-rich tracts occupy residues 110–120 (DGGHRRDERKG) and 132–142 (SKAEQERRKGI). Residues 133-140 (KAEQERRK) carry the Nuclear localization signal 1 motif. Residues 136-192 (QERRKGIPWTEEEHRLFLLGLDKFGKGDWRSISRNFVISRTPTQVASHAQKYFIRLN) form the HTH myb-type domain. The segment at residues 164–188 (WRSISRNFVISRTPTQVASHAQKYF) is a DNA-binding region (H-T-H motif). A Nuclear localization signal 2 motif is present at residues 196 to 200 (RDRRR). The short motif at 203–215 (IHDITSVTAGDQV) is the Nuclear export signal 2 element. The segment covering 228–241 (ATGNPAAAALGPPG) has biased composition (low complexity). Positions 228–255 (ATGNPAAAALGPPGMKHHHHHHPGGAPP) are disordered.

As to quaternary structure, homodimer. Interacts with GAMYB. As to expression, expressed in aboveground tissues, with the highest level in leaves.

It is found in the nucleus. The protein localises to the cytoplasm. In terms of biological role, transcription activator that binds to 5'-TATCCA-3' elements in gene promoters. Derepresses strongly the sugar-repressed transcription of promoters containing SRS or 5'-TATCCA-3' elements. Functions with GAMYB to integrate diverse nutrient starvation and gibberellin (GA) signaling pathways during germination of grains. Sugar, nitrogen and phosphate starvation signals converge and interconnect with GA to promote the co-nuclear import of MYBS1 and GAMYB, resulting in the expression of a large set of GA-inducible hydrolases, transporters, and regulators that are essential for mobilization of nutrient reserves in the endosperm to support seedling growth. This Oryza sativa subsp. japonica (Rice) protein is Transcription factor MYBS1.